Here is a 184-residue protein sequence, read N- to C-terminus: Ribosome-recycling factor (184 aa).

It belongs to the RRF family.

It localises to the cytoplasm. Responsible for the release of ribosomes from messenger RNA at the termination of protein biosynthesis. May increase the efficiency of translation by recycling ribosomes from one round of translation to another. In Hyphomonas neptunium (strain ATCC 15444), this protein is Ribosome-recycling factor.